A 1976-amino-acid polypeptide reads, in one-letter code: Myosin-10 (1976 aa).

Arg18 is subject to Omega-N-methylarginine. The 51-residue stretch at 31–81 folds into the Myosin N-terminal SH3-like domain; it reads TAKKLVWIPSERHGFEAASIKEERGDEVMVELAENGKKAMVNKDDIQKMNP. Residues 85–783 form the Myosin motor domain; that stretch reads SKVEDMAELT…VLAHLEEERD (699 aa). Position 178–185 (178–185) interacts with ATP; that stretch reads GESGAGKT. An N6-acetyllysine modification is found at Lys442. An actin-binding region spans residues 661–683; that stretch reads LTKLMATLRNTNPNFVRCIIPNH. Positions 786-815 constitute an IQ domain; that stretch reads ITDIIIFFQAVCRGYLARKAFAKKQQQLSA. Residues 845 to 1976 adopt a coiled-coil conformation; sequence LQVTRQEEEL…VNETQPPQSE (1132 aa). The tract at residues 1125-1175 is disordered; it reads EDFESEKASRNKAEKQKRDLSEELEALKTELEDTLDTTAAQQELRTKREQE. A compositionally biased stretch (basic and acidic residues) spans 1129–1155; sequence SEKASRNKAEKQKRDLSEELEALKTEL. Ser1145 is modified (phosphoserine). An N6-acetyllysine mark is found at Lys1241, Lys1301, and Lys1645. 2 disordered regions span residues 1697-1718 and 1874-1976; these read ASSERARRHAEQERDELADEIA and KANA…PQSE. A compositionally biased stretch (basic and acidic residues) spans 1698 to 1708; the sequence is SSERARRHAEQ. Arg1930 bears the Omega-N-methylarginine mark. Residues Ser1935, Ser1937, Ser1938, and Ser1939 each carry the phosphoserine modification. Arg1940 carries the post-translational modification Omega-N-methylarginine. Ser1952 and Ser1956 each carry phosphoserine. Thr1960 is subject to Phosphothreonine. The span at 1967-1976 shows a compositional bias: polar residues; sequence VNETQPPQSE. Ser1975 carries the post-translational modification Phosphoserine.

Belongs to the TRAFAC class myosin-kinesin ATPase superfamily. Myosin family. In terms of assembly, myosin is a hexameric protein that consists of 2 heavy chain subunits (MHC), 2 alkali light chain subunits (MLC) and 2 regulatory light chain subunits (MLC-2). Interacts with PLEKHG6. Interacts with ECPAS. Interacts with KIF26B. Interacts with LARP6. Interacts with MCC. Interacts with CFAP95. Phosphorylated by ABL2.

Its subcellular location is the cell projection. The protein resides in the lamellipodium. Its function is as follows. Involved with LARP6 in the stabilization of type I collagen mRNAs for CO1A1 and CO1A2. During cell spreading, plays an important role in cytoskeleton reorganization, focal contacts formation (in the central part but not the margins of spreading cells), and lamellipodial extension; this function is mechanically antagonized by MYH9. Cellular myosin that appears to play a role in cytokinesis, cell shape, and specialized functions such as secretion and capping. This is Myosin-10 (Myh10) from Rattus norvegicus (Rat).